Here is a 269-residue protein sequence, read N- to C-terminus: 15-hydroxyprostaglandin dehydrogenase [NAD(+)] (269 aa).

NAD(+) contacts are provided by residues 12–20, 36–37, 63–65, and Asn-91; these read GAAQGIGKA, DW, and CDV. Residues Ser-138 and Gln-148 each coordinate substrate. The active-site Proton acceptor is Tyr-151. Residues 151–155 and 186–188 contribute to the NAD(+) site; these read YCASK and VDT.

This sequence belongs to the short-chain dehydrogenases/reductases (SDR) family. In terms of assembly, homodimer. Expressed in proximal convoluted tubules of the kidney, where it colocalizes with the prostaglandin transporter SLC22A22 (at protein level). Expressed in lung, intestine, stomach and liver.

It is found in the cytoplasm. It carries out the reaction prostaglandin E2 + NAD(+) = 15-oxoprostaglandin E2 + NADH + H(+). The enzyme catalyses (15S)-hydroxy-(5Z,8Z,11Z,13E)-eicosatetraenoate + NAD(+) = 15-oxo-(5Z,8Z,11Z,13E)-eicosatetraenoate + NADH + H(+). It catalyses the reaction (11R)-hydroxy-(5Z,8Z,12E,14Z)-eicosatetraenoate + NAD(+) = 11-oxo-(5Z,8Z,12E,14Z)-eicosatetraenoate + NADH + H(+). The catalysed reaction is lipoxin A4 + NAD(+) = 15-oxo-(5S,6R)-dihydroxy-(7E,9E,11Z,13E)-eicosatetraenoate + NADH + H(+). It carries out the reaction 15-oxo-(5S,6R)-dihydroxy-(7E,9E,11Z)-eicosatrienoate + NADH + H(+) = (5S,6R,15S)-trihydroxy-(7E,9E,11Z)-eicosatrienoate + NAD(+). The enzyme catalyses prostaglandin A1 + NAD(+) = 15-oxo-prostaglandin A1 + NADH + H(+). It catalyses the reaction prostaglandin E1 + NAD(+) = 15-oxoprostaglandin E1 + NADH + H(+). The catalysed reaction is 14-hydroxy-(4Z,7Z,10Z,12E,16Z,19Z)-docosahexaenoate + NAD(+) = 14-oxo-(4Z,7Z,10Z,12E,16Z,19Z)-docosahexaenoate + NADH + H(+). It carries out the reaction resolvin E1 + NAD(+) = 18-oxo-resolvin E1 + NADH + H(+). The enzyme catalyses resolvin D1 + NAD(+) = 8-oxoresolvin D1 + NADH + H(+). It catalyses the reaction resolvin D1 + NAD(+) = 17-oxoresolvin D1 + NADH + H(+). The catalysed reaction is resolvin D2 + NAD(+) = 7-oxoresolvin D2 + NADH + H(+). It carries out the reaction resolvin D2 + NAD(+) = 16-oxoresolvin D2 + NADH + H(+). Catalyzes the NAD-dependent dehydrogenation (oxidation) of a broad array of hydroxylated polyunsaturated fatty acids (mainly eicosanoids and docosanoids, including prostaglandins, lipoxins and resolvins), yielding their corresponding keto (oxo) metabolites. Decreases the levels of the pro-proliferative prostaglandins such as prostaglandin E2 (whose activity is increased in cancer because of an increase in the expression of cyclooxygenase 2) and generates oxo-fatty acid products that can profoundly influence cell function by abrogating pro-inflammatory cytokine expression. Converts resolvins E1, D1 and D2 to their oxo products, which represents a mode of resolvin inactivation. Resolvin E1 plays important roles during the resolution phase of acute inflammation, while resolvins D1 and D2 have a unique role in obesity-induced adipose inflammation. The sequence is that of 15-hydroxyprostaglandin dehydrogenase [NAD(+)] (Hpgd) from Mus musculus (Mouse).